The sequence spans 117 residues: Protein Wnt-6 (117 aa).

Ser1 carries the O-palmitoleoyl serine; by PORCN lipid modification. An intrachain disulfide couples Cys83 to Cys98. Asn84 carries an N-linked (GlcNAc...) asparagine glycan.

The protein belongs to the Wnt family. In terms of processing, palmitoleoylation is required for efficient binding to frizzled receptors. Depalmitoleoylation leads to Wnt signaling pathway inhibition.

It localises to the secreted. Its subcellular location is the extracellular space. It is found in the extracellular matrix. In terms of biological role, ligand for members of the frizzled family of seven transmembrane receptors. Probable developmental protein. May be a signaling molecule which affects the development of discrete regions of tissues. Is likely to signal over only few cell diameters. This chain is Protein Wnt-6 (WNT-6), found in Strongylocentrotus purpuratus (Purple sea urchin).